Here is a 182-residue protein sequence, read N- to C-terminus: Large ribosomal subunit protein uL10 (182 aa).

It belongs to the universal ribosomal protein uL10 family. As to quaternary structure, part of the ribosomal stalk of the 50S ribosomal subunit. The N-terminus interacts with L11 and the large rRNA to form the base of the stalk. The C-terminus forms an elongated spine to which L12 dimers bind in a sequential fashion forming a multimeric L10(L12)X complex.

Functionally, forms part of the ribosomal stalk, playing a central role in the interaction of the ribosome with GTP-bound translation factors. This chain is Large ribosomal subunit protein uL10, found in Parafrankia sp. (strain EAN1pec).